A 143-amino-acid polypeptide reads, in one-letter code: Nucleoside diphosphate kinase (143 aa).

Residues Lys11, Phe59, Arg87, Thr93, Arg104, and Asn114 each contribute to the ATP site. His117 acts as the Pros-phosphohistidine intermediate in catalysis.

This sequence belongs to the NDK family. In terms of assembly, homotetramer. It depends on Mg(2+) as a cofactor.

Its subcellular location is the cytoplasm. It carries out the reaction a 2'-deoxyribonucleoside 5'-diphosphate + ATP = a 2'-deoxyribonucleoside 5'-triphosphate + ADP. The catalysed reaction is a ribonucleoside 5'-diphosphate + ATP = a ribonucleoside 5'-triphosphate + ADP. Major role in the synthesis of nucleoside triphosphates other than ATP. The ATP gamma phosphate is transferred to the NDP beta phosphate via a ping-pong mechanism, using a phosphorylated active-site intermediate. This is Nucleoside diphosphate kinase from Salmonella agona (strain SL483).